A 377-amino-acid polypeptide reads, in one-letter code: Chaperone protein DnaJ (377 aa).

Residues 4–69 (DYYEALGVTR…QKRAAYDRFG (66 aa)) enclose the J domain. The CR-type zinc-finger motif lies at 135–213 (GKTAQIRVPT…CHGQGRVTQE (79 aa)). Cys-148, Cys-151, Cys-165, Cys-168, Cys-187, Cys-190, Cys-201, and Cys-204 together coordinate Zn(2+). 4 CXXCXGXG motif repeats span residues 148-155 (CDECSGSG), 165-172 (CTMCSGSG), 187-194 (CPGCNGRG), and 201-208 (CEKCHGQG).

This sequence belongs to the DnaJ family. As to quaternary structure, homodimer. Requires Zn(2+) as cofactor.

It is found in the cytoplasm. Participates actively in the response to hyperosmotic and heat shock by preventing the aggregation of stress-denatured proteins and by disaggregating proteins, also in an autonomous, DnaK-independent fashion. Unfolded proteins bind initially to DnaJ; upon interaction with the DnaJ-bound protein, DnaK hydrolyzes its bound ATP, resulting in the formation of a stable complex. GrpE releases ADP from DnaK; ATP binding to DnaK triggers the release of the substrate protein, thus completing the reaction cycle. Several rounds of ATP-dependent interactions between DnaJ, DnaK and GrpE are required for fully efficient folding. Also involved, together with DnaK and GrpE, in the DNA replication of plasmids through activation of initiation proteins. This chain is Chaperone protein DnaJ, found in Brucella ovis (strain ATCC 25840 / 63/290 / NCTC 10512).